The primary structure comprises 1349 residues: ABC multidrug transporter G (1349 aa).

The 249-residue stretch at 51–299 (RQFLGFLKGS…FEDMGFVCPK (249 aa)) folds into the ABC transporter 1 domain. N-linked (GlcNAc...) asparagine glycosylation occurs at N144. The next 4 helical transmembrane spans lie at 407–427 (LSLI…GSLF), 436–456 (SIFL…LESM), 492–512 (IPVV…MAAL), and 523–543 (WIIV…VGAL). Residue N549 is glycosylated (N-linked (GlcNAc...) asparagine). The next 2 helical transmembrane spans lie at 550-570 (ASKI…YLIP) and 580-600 (WIFY…NEFV). The N-linked (GlcNAc...) asparagine glycan is linked to N649. The chain crosses the membrane as a helical span at residues 659–679 (FGVIIGFWVFFIVLTALGLEL). Positions 721–963 (FTWHDLDYHV…VLDYFARHGA (243 aa)) constitute an ABC transporter 2 domain. Residue 757 to 764 (GCSGAGKT) coordinates ATP. N994 carries an N-linked (GlcNAc...) asparagine glycan. 6 helical membrane passes run 1056-1076 (VILH…IGDG), 1085-1105 (FAIF…QPFF), 1121-1143 (IYHW…ILCA), 1166-1186 (MYLQ…GIAA), 1193-1213 (FAAV…CGVV), and 1226-1246 (WLYY…EVLW). An N-linked (GlcNAc...) asparagine glycan is attached at N1287. A helical transmembrane segment spans residues 1318–1338 (TGITALFCVSSYAMVFLMMKL).

It belongs to the ABC transporter superfamily. ABCG family. PDR (TC 3.A.1.205) subfamily.

Its subcellular location is the cell membrane. In terms of biological role, ABC efflux transporter that seems not to be able to transport azoles, nor rhodamine 6G (R-6G), a known substrate for many ABC transporters. The sequence is that of ABC multidrug transporter G from Aspergillus fumigatus (strain ATCC MYA-4609 / CBS 101355 / FGSC A1100 / Af293) (Neosartorya fumigata).